The sequence spans 358 residues: MKPFEVPPWEEGADIIEFEPVNPSGNGVAAKKKPKKKKPKKKKAAVPNENLNVNKAAEKFTYRQGRGPLAPPQDSSDDDYEDVEDGIRAMHKVKSGRIEKQRPPTQATKGGKKELKLKPELAQAALEAMEATSSTTPAANSLASKLQSELLGGRFRYINEQLYSTTSRKAEALFRKDSSAFEAYHAGYRQQVEKWPINPLNRIIKTIKKIPKTAIIGDFGCGEGKLAQSVPNKVYSMDLVAARSDIIACNITDTPLQARTLDVAVYCLSLMGTDLNEFFLEANRVLKLHGTVYIAEIQSRFQDVREFVRCLNACGFDLNKKDVAVNYFYFFQFKKMRHVPKNTKMKAFSLKPCLYRKR.

Residues 1-81 are disordered; sequence MKPFEVPPWE…PQDSSDDDYE (81 aa). The segment covering 30–44 has biased composition (basic residues); that stretch reads AKKKPKKKKPKKKKA. Residues Ser75 and Ser76 each carry the phosphoserine modification. S-adenosyl-L-methionine contacts are provided by His185, Gly220, Asp238, and Cys267.

Belongs to the methyltransferase superfamily. RRP8 family.

It localises to the nucleus. The protein localises to the nucleolus. Its function is as follows. Probable methyltransferase required to silence rDNA. The sequence is that of Ribosomal RNA-processing protein 8 from Drosophila melanogaster (Fruit fly).